We begin with the raw amino-acid sequence, 805 residues long: MSKLTTGSFSIEDLESVQITINNIVGAAKEAAEEKAKELGPMGPTAMAGLASYRSWNLLLLDRYEPVLTPMCDQCCYCTYGPCDLSGNKRGACGIDMAGQTGREFFLRVITGTACHAAHGRHLLDHVIEVFGEDLPLNLGESNVLTPNVTICTGLSPKTLGECRAPMEYVEEQLTQLLATIHAGQESAEIDYDSKALFSGSLDHVGMEVSDIAQVSAYDFPKADPEAPLIEIGMGSIDKSKPLIVAIGHNVAGVTYIMDYMEENNLTDKMEIAGLCCTAFDMTRYKEADRRAPYAKIVGSLAKELKVIRSGMPDVIVVDEQCVRGDVLSESQKLKIPVIASNEKIMMGLPDRTDADVDSIVEEIKSGAIPGCVMLDYDKLGELIPKIAEVMAPIRDAEGITAIPTDEEFKVYIDKCVKCGECMLACPEELDIPEALEYAAKGSYEYLEALHDVCIGCRRCEQVCKKEIPILNVLEKAAQKSISEEKGWVRSGRGQASDAEIRKEGLNLVMGTTPGIIAIIGCPNYPAGTKDVYLIAEEFLKRNYLLAVSGCSAMDIGMFKDEDGKTLYEKYPGTFAGGGLLNTGSCVSNAHISGAAEKVAGIFAQRTLAGNLAEIADYTLNRVGACGLAWGAYSQKAASIGTGCNIYGIPAVLGPHSSKYRRALIAKNYDESKWKVYDGRDGSEMTIPPAPEFLLTTAETWQEAIPMMAKACIRPSDNNMGRSIKLTHWMELSKKYLGVEPEDWWKFVRNEADLPLAKREELLKRLEAEHGWEIDWKRKKIISGPKIKFDVSAQPTNLKRLCKEA.

Residues C72, C75, C76, C78, C83, and C93 each contribute to the [4Fe-4S] cluster site. CO is bound at residue H116. H249, C277, and C322 together coordinate [Ni-4Fe-4S] cluster. 4Fe-4S ferredoxin-type domains lie at 407 to 435 (EEFKVYIDKCVKCGECMLACPEELDIPEA) and 445 to 474 (EYLEALHDVCIGCRRCEQVCKKEIPILNVL). [4Fe-4S] cluster contacts are provided by C416, C419, C422, C426, C454, C457, C460, and C464. Residues C522, C551, and C586 each contribute to the [Ni-4Fe-4S] cluster site.

This sequence belongs to the Ni-containing carbon monoxide dehydrogenase family. As to quaternary structure, heterotetramer of two alpha and two epsilon subunits. The ACDS complex is made up of alpha, epsilon, beta, gamma and delta subunits with a probable stoichiometry of (alpha(2)epsilon(2))(4)-beta(8)-(gamma(1)delta(1))(8). [4Fe-4S] cluster is required as a cofactor. [Ni-4Fe-4S] cluster serves as cofactor.

It carries out the reaction CO + 2 oxidized [2Fe-2S]-[ferredoxin] + H2O = 2 reduced [2Fe-2S]-[ferredoxin] + CO2 + 2 H(+). It participates in one-carbon metabolism; methanogenesis from acetate. In terms of biological role, part of the ACDS complex that catalyzes the reversible cleavage of acetyl-CoA, allowing growth on acetate as sole source of carbon and energy. The alpha-epsilon subcomponent functions as a carbon monoxide dehydrogenase. This is Acetyl-CoA decarbonylase/synthase complex subunit alpha 2 from Methanosarcina acetivorans (strain ATCC 35395 / DSM 2834 / JCM 12185 / C2A).